An 81-amino-acid chain; its full sequence is Anaphase-promoting complex subunit emb-1 (81 aa).

In terms of assembly, the APC/C is probably composed of at least 12 subunits: apc-2, apc-10, apc-11, cdc-26, emb-1, emb-27, emb-30, mat-1, mat-2, mat-3, such-1 and gfi-3. Expressed in germ cells.

The protein operates within protein modification; protein ubiquitination. In terms of biological role, probable component of the anaphase promoting complex/cyclosome (APC/C), a cell cycle-regulated E3 ubiquitin ligase that controls progression through mitosis and the G1 phase of the cell cycle. The APC/C complex acts by mediating ubiquitination and subsequent degradation of target proteins. Developmental role in early embryogenesis and the metaphase to anaphase transition in meiosis and mitosis. May be required for germline proliferation. Required for male tail development and hermaphrodite vulva formation. The polypeptide is Anaphase-promoting complex subunit emb-1 (Caenorhabditis elegans).